Consider the following 484-residue polypeptide: Glycogen synthase (484 aa).

Residue Lys-15 participates in ADP-alpha-D-glucose binding.

It belongs to the glycosyltransferase 1 family. Bacterial/plant glycogen synthase subfamily.

The catalysed reaction is [(1-&gt;4)-alpha-D-glucosyl](n) + ADP-alpha-D-glucose = [(1-&gt;4)-alpha-D-glucosyl](n+1) + ADP + H(+). The protein operates within glycan biosynthesis; glycogen biosynthesis. Its function is as follows. Synthesizes alpha-1,4-glucan chains using ADP-glucose. In Bacillus subtilis (strain 168), this protein is Glycogen synthase (glgA).